The sequence spans 245 residues: MWERRGRGESAAGTAAVASRNASGLRPPPAILPTSMCQPPGIMQFEESQLGAQAPRATQPPDLRPMETFLTGEPKALGTVQILIGLIHLGFGSVLLMVRRGHLGMLFIEGGVPFWGGACFIISGSLSVAAERNHTSCLLKSSLGTNILSAMAAFAGTAILLMDFGVTNWDVGRGYLAVLTIFTILEFFIAVIATHFGCQATRAQTNASVIFLPNAFGTDFNIPSPAVSPPPAYDNVAYMPKESSE.

Residues 1–30 are disordered; the sequence is MWERRGRGESAAGTAAVASRNASGLRPPPA. 4 helical membrane passes run 78 to 98, 103 to 123, 147 to 167, and 176 to 196; these read GTVQILIGLIHLGFGSVLLMV, LGMLFIEGGVPFWGGACFIIS, ILSAMAAFAGTAILLMDFGVT, and LAVLTIFTILEFFIAVIATHF.

The protein belongs to the MS4A family.

The protein localises to the membrane. Its function is as follows. May be involved in signal transduction as a component of a multimeric receptor complex. The protein is Membrane-spanning 4-domains subfamily A member 15 (Ms4a15) of Mus musculus (Mouse).